Reading from the N-terminus, the 383-residue chain is Succinyl-diaminopimelate desuccinylase (383 aa).

Zn(2+) is bound at residue H74. D76 is an active-site residue. D107 provides a ligand contact to Zn(2+). Catalysis depends on E141, which acts as the Proton acceptor. The Zn(2+) site is built by E142, E170, and H356.

It belongs to the peptidase M20A family. DapE subfamily. Homodimer. It depends on Zn(2+) as a cofactor. The cofactor is Co(2+).

It carries out the reaction N-succinyl-(2S,6S)-2,6-diaminopimelate + H2O = (2S,6S)-2,6-diaminopimelate + succinate. It participates in amino-acid biosynthesis; L-lysine biosynthesis via DAP pathway; LL-2,6-diaminopimelate from (S)-tetrahydrodipicolinate (succinylase route): step 3/3. Catalyzes the hydrolysis of N-succinyl-L,L-diaminopimelic acid (SDAP), forming succinate and LL-2,6-diaminopimelate (DAP), an intermediate involved in the bacterial biosynthesis of lysine and meso-diaminopimelic acid, an essential component of bacterial cell walls. In Cupriavidus pinatubonensis (strain JMP 134 / LMG 1197) (Cupriavidus necator (strain JMP 134)), this protein is Succinyl-diaminopimelate desuccinylase.